Consider the following 195-residue polypeptide: Putative lysine exporter (195 aa).

The next 6 helical transmembrane spans lie at 4-24 (LLSAVIIGIVLGWLCKDWLHF), 30-50 (LYVLITLIFFVGIQLRNNGIS), 61-81 (LMMGAIFTLSSLIGGVISAFF), 86-106 (ITQGLAFSSGFGWYSLSSVVL), 117-137 (IAFFNDLSREILSLFLIPLFM), and 170-190 (PIAISFGMVTNLLPPLLLVFF).

Belongs to the LysO family.

Its subcellular location is the cell inner membrane. Functionally, mediates export of lysine. This Haemophilus influenzae (strain ATCC 51907 / DSM 11121 / KW20 / Rd) protein is Putative lysine exporter.